Consider the following 172-residue polypeptide: Carotene biosynthesis-related protein CBR, chloroplastic (172 aa).

The tract at residues 41-66 (AENNPSTPPPSSPSPPPPPPTPAAPT) is disordered. The span at 46-63 (STPPPSSPSPPPPPPTPA) shows a compositional bias: pro residues. 2 helical membrane-spanning segments follow: residues 111-131 (PTLI…PAFA) and 152-172 (FAMI…IALF).

Belongs to the ELIP/psbS family.

The protein resides in the plastid. It localises to the chloroplast membrane. Its function is as follows. Putative zeaxanthin binding protein. That forms photoprotective complexes within the light-harvesting antennae. The chain is Carotene biosynthesis-related protein CBR, chloroplastic (CBR) from Dunaliella salina (Green alga).